We begin with the raw amino-acid sequence, 467 residues long: Cysteine--tRNA ligase (467 aa).

Cys28 contributes to the Zn(2+) binding site. A 'HIGH' region motif is present at residues 30-40; that stretch reads PTVYNYIHVGN. Residues Cys212, His237, and Glu241 each contribute to the Zn(2+) site. The 'KMSKS' region signature appears at 269–273; it reads KMSKS. Lys272 is a binding site for ATP.

This sequence belongs to the class-I aminoacyl-tRNA synthetase family. As to quaternary structure, monomer. It depends on Zn(2+) as a cofactor.

The protein resides in the cytoplasm. The catalysed reaction is tRNA(Cys) + L-cysteine + ATP = L-cysteinyl-tRNA(Cys) + AMP + diphosphate. This Oenococcus oeni (strain ATCC BAA-331 / PSU-1) protein is Cysteine--tRNA ligase.